The chain runs to 57 residues: Protein Ric1 (57 aa).

Helical transmembrane passes span 8-28 (IPRL…QVGC) and 34-54 (INCL…VYIL).

The protein belongs to the UPF0057 (PMP3) family.

The protein resides in the membrane. This chain is Protein Ric1 (RIC1), found in Phytophthora infestans (Potato late blight agent).